We begin with the raw amino-acid sequence, 72 residues long: Probable neurotoxin pcD-993 (72 aa).

Residues 1–19 form the signal peptide; it reads MNYLVMISFALLLVIGVES. The LCN-type CS-alpha/beta domain maps to 21 to 72; that stretch reads RDGYFVEPDNCVVHCMPSSEMCDRGCKHNGATSGSCKAFSKGGNACWCKGLR. 3 cysteine pairs are disulfide-bonded: Cys35/Cys56, Cys42/Cys66, and Cys46/Cys68. Position 72 (Arg72) is a propeptide, removed by a carboxypeptidase.

The protein belongs to the long (3 C-C) scorpion toxin superfamily. In terms of tissue distribution, expressed by the venom gland.

The protein localises to the secreted. The sequence is that of Probable neurotoxin pcD-993 from Androctonus australis (Sahara scorpion).